Reading from the N-terminus, the 164-residue chain is Arginine repressor (164 aa).

This sequence belongs to the ArgR family.

The protein resides in the cytoplasm. It functions in the pathway amino-acid biosynthesis; L-arginine biosynthesis [regulation]. Its function is as follows. Regulates arginine biosynthesis genes. The chain is Arginine repressor from Mycobacterium avium (strain 104).